Reading from the N-terminus, the 67-residue chain is Surface composition regulator (67 aa).

It belongs to the GlgS family.

In terms of biological role, major determinant of cell surface composition. Negatively regulates motility, adhesion and synthesis of biofilm exopolysaccharides. The protein is Surface composition regulator of Salmonella enteritidis PT4 (strain P125109).